Here is a 194-residue protein sequence, read N- to C-terminus: ATP-dependent Clp protease proteolytic subunit (194 aa).

Residue Ser98 is the Nucleophile of the active site. His123 is an active-site residue.

This sequence belongs to the peptidase S14 family. As to quaternary structure, fourteen ClpP subunits assemble into 2 heptameric rings which stack back to back to give a disk-like structure with a central cavity, resembling the structure of eukaryotic proteasomes.

It is found in the cytoplasm. The enzyme catalyses Hydrolysis of proteins to small peptides in the presence of ATP and magnesium. alpha-casein is the usual test substrate. In the absence of ATP, only oligopeptides shorter than five residues are hydrolyzed (such as succinyl-Leu-Tyr-|-NHMec, and Leu-Tyr-Leu-|-Tyr-Trp, in which cleavage of the -Tyr-|-Leu- and -Tyr-|-Trp bonds also occurs).. In terms of biological role, cleaves peptides in various proteins in a process that requires ATP hydrolysis. Has a chymotrypsin-like activity. Plays a major role in the degradation of misfolded proteins. This is ATP-dependent Clp protease proteolytic subunit from Clostridium kluyveri (strain NBRC 12016).